Consider the following 61-residue polypeptide: Metallothionein-1 (61 aa).

An N-acetylmethionine modification is found at M1. Positions 1–29 (MDPNCSCATGVSCTCADSCKCKECKCTSC) are beta. Residues C5, C7, C13, C15, C19, C21, C24, C26, C29, C33, C34, C36, C37, C41, C44, C48, C50, C57, C59, and C60 each coordinate a divalent metal cation. An alpha region spans residues 30-61 (KKSCCSCCPVGCAKCAQGCVCKGASEKCNCCA).

Belongs to the metallothionein superfamily. Type 1 family.

Functionally, metallothioneins have a high content of cysteine residues that bind various heavy metals; these proteins are transcriptionally regulated by both heavy metals and glucocorticoids. This Chlorocebus aethiops (Green monkey) protein is Metallothionein-1 (MT1).